The following is a 258-amino-acid chain: Synapse differentiation-inducing gene protein 1-like (258 aa).

The Extracellular portion of the chain corresponds to 1-182 (MESLSELQNP…FIVIPPRDHL (182 aa)). A helical membrane pass occupies residues 183 to 203 (GLAIFSMLCCFWPLGIAAFYF). The Cytoplasmic segment spans residues 204-228 (SQGTSKAVTKGDFPLASIASRRALF). Residues 229–249 (LAALSITIGTGVYVGVVVALI) form a helical membrane-spanning segment. Residues 250-258 (AYLSKPGHI) are Extracellular-facing.

Belongs to the CD225/Dispanin family.

It localises to the membrane. The protein resides in the golgi apparatus. Its subcellular location is the cis-Golgi network. The chain is Synapse differentiation-inducing gene protein 1-like (syndig1l) from Danio rerio (Zebrafish).